We begin with the raw amino-acid sequence, 857 residues long: Zinc finger protein 574 (857 aa).

14 consecutive C2H2-type zinc fingers follow at residues 15 to 37 (YVCS…QQSH), 58 to 80 (YQCL…QELH), 99 to 121 (YECP…RYTH), 206 to 228 (YKCS…QGTH), 297 to 319 (FSCG…QISH), 324 to 346 (FSCP…LKSH), 352 to 374 (YLCV…RRSH), 380 to 401 (FTCE…RRVH), 428 to 451 (FHCD…RFVH), 457 to 479 (HKCP…MLTH), 485 to 507 (YSCT…RLTH), 513 to 535 (YKCQ…QYVH), 541 to 563 (YKCN…QYHH), and 569 to 591 (YKCQ…QLGH). A C2H2-type 15; degenerate zinc finger spans residues 597 to 619 (HRCRECGTNFPSVQRLQDHRCSK). 5 C2H2-type zinc fingers span residues 628–651 (LECP…AAQH), 681–703 (LECS…RRIH), 709–731 (YPCP…RRLH), 737–759 (FKCD…KRIH), and 765–787 (HSCP…RKLH). Residues 648–678 (AAQHSGNKRSNVSSGKGTPVLPRNKLKGGGG) are disordered. The segment covering 651–663 (HSGNKRSNVSSGK) has biased composition (polar residues).

This sequence belongs to the krueppel C2H2-type zinc-finger protein family.

It is found in the nucleus. Its function is as follows. May be involved in transcriptional regulation. The protein is Zinc finger protein 574 (znf574) of Xenopus tropicalis (Western clawed frog).